A 600-amino-acid polypeptide reads, in one-letter code: Potassium-transporting ATPase potassium-binding subunit (600 aa).

11 helical membrane-spanning segments follow: residues 6–26 (IILLAVFLLVLLVLAYPLGTY), 65–85 (GYAIALLVFNVLGTFFVYAVQ), 136–156 (ALSGQNFFSAATGIAVIYALI), 179–199 (LYVLLPLSVIVAVVLMSQGVI), 283–303 (FSNLVEMLAIFLIPAALCFTF), 314–334 (WAILGAMTLLFVVLTAVVMGA), 367–387 (FGISASTLFAAVTTAASCGAV), 419–439 (GLYGMLVFAILAVFIAGLMIG), 458–478 (SLVILVTPCLVLLGTAIAVVL), 523–543 (VMLAIAMWFGRFAVIVPVLAI), and 566–586 (LFIALLVGTVLLVGVLNYVPA).

Belongs to the KdpA family. As to quaternary structure, the system is composed of three essential subunits: KdpA, KdpB and KdpC.

It localises to the cell inner membrane. In terms of biological role, part of the high-affinity ATP-driven potassium transport (or Kdp) system, which catalyzes the hydrolysis of ATP coupled with the electrogenic transport of potassium into the cytoplasm. This subunit binds the periplasmic potassium ions and delivers the ions to the membrane domain of KdpB through an intramembrane tunnel. The protein is Potassium-transporting ATPase potassium-binding subunit of Janthinobacterium sp. (strain Marseille) (Minibacterium massiliensis).